A 159-amino-acid polypeptide reads, in one-letter code: Adult-specific rigid cuticular protein 15.7 (159 aa).

The Chitin-binding type R&amp;R domain maps to 23-89 (LGNYAFNYGI…SIKTNEPGTA (67 aa)).

In terms of biological role, component of the rigid cuticle of the spider. The chain is Adult-specific rigid cuticular protein 15.7 from Araneus diadematus (European garden spider).